The sequence spans 440 residues: Ribulose bisphosphate carboxylase large chain (440 aa).

Residue Lys4 is modified to N6,N6,N6-trimethyllysine. Residues Asn113 and Thr163 each coordinate substrate. The active-site Proton acceptor is the Lys165. Lys167 contributes to the substrate binding site. The Mg(2+) site is built by Lys191, Asp193, and Glu194. Lys191 is subject to N6-carboxylysine. His284 acts as the Proton acceptor in catalysis. 3 residues coordinate substrate: Arg285, His317, and Ser369.

Belongs to the RuBisCO large chain family. Type I subfamily. As to quaternary structure, heterohexadecamer of 8 large chains and 8 small chains; disulfide-linked. The disulfide link is formed within the large subunit homodimers. Mg(2+) serves as cofactor. In terms of processing, the disulfide bond which can form in the large chain dimeric partners within the hexadecamer appears to be associated with oxidative stress and protein turnover.

The protein localises to the plastid. The protein resides in the chloroplast. It catalyses the reaction 2 (2R)-3-phosphoglycerate + 2 H(+) = D-ribulose 1,5-bisphosphate + CO2 + H2O. The enzyme catalyses D-ribulose 1,5-bisphosphate + O2 = 2-phosphoglycolate + (2R)-3-phosphoglycerate + 2 H(+). Its function is as follows. RuBisCO catalyzes two reactions: the carboxylation of D-ribulose 1,5-bisphosphate, the primary event in carbon dioxide fixation, as well as the oxidative fragmentation of the pentose substrate in the photorespiration process. Both reactions occur simultaneously and in competition at the same active site. In Pteris vittata (Chinese ladder brake), this protein is Ribulose bisphosphate carboxylase large chain.